Here is a 64-residue protein sequence, read N- to C-terminus: Large ribosomal subunit protein uL29 (64 aa).

It belongs to the universal ribosomal protein uL29 family.

This is Large ribosomal subunit protein uL29 from Levilactobacillus brevis (strain ATCC 367 / BCRC 12310 / CIP 105137 / JCM 1170 / LMG 11437 / NCIMB 947 / NCTC 947) (Lactobacillus brevis).